A 103-amino-acid chain; its full sequence is Phosphoribosyl-ATP pyrophosphatase (103 aa).

This sequence belongs to the PRA-PH family.

The protein localises to the cytoplasm. The enzyme catalyses 1-(5-phospho-beta-D-ribosyl)-ATP + H2O = 1-(5-phospho-beta-D-ribosyl)-5'-AMP + diphosphate + H(+). It functions in the pathway amino-acid biosynthesis; L-histidine biosynthesis; L-histidine from 5-phospho-alpha-D-ribose 1-diphosphate: step 2/9. This is Phosphoribosyl-ATP pyrophosphatase from Cereibacter sphaeroides (strain ATCC 17029 / ATH 2.4.9) (Rhodobacter sphaeroides).